Consider the following 1144-residue polypeptide: Guanine nucleotide-binding protein G(s) subunit alpha isoforms XLas (1144 aa).

4 disordered regions span residues 1-186, 316-558, 622-657, and 735-772; these read MGML…LAPG, DDDT…PAAG, SASA…SAWP, and RSRS…DKKR. Positions 31-46 are enriched in low complexity; it reads LEAQGAAAPGAGVGPA. The segment covering 343 to 356 has biased composition (basic and acidic residues); that stretch reads KSEHAKRPPLERQA. A compositionally biased stretch (polar residues) spans 358–369; it reads ETGNSPISSTTA. Residues 370–381 are compositionally biased toward basic and acidic residues; that stretch reads EEAKVPSLERGE. 2 stretches are compositionally biased toward low complexity: residues 467–499 and 518–558; these read PAAA…AAEA and EPAA…PAAG. Over residues 644 to 654 the composition is skewed to pro residues; sequence PPTPRPAPRPS. The segment covering 743-767 has biased composition (basic and acidic residues); sequence KAKDPMEERRKQMRKEAMEMREQKR. Residues 745–772 adopt a coiled-coil conformation; sequence KDPMEERRKQMRKEAMEMREQKRADKKR. In terms of domain architecture, G-alpha spans 789–1144; the sequence is CTHRLLLLGA…RMHLRQYELL (356 aa). The tract at residues 792–805 is G1 motif; sequence RLLLLGAGESGKST. Residue 797–805 coordinates GTP; sequence GAGESGKST. Position 804 (S804) interacts with Mg(2+). Residues 818 to 840 are disordered; sequence FNGEGGEEDPQAARSNSDGEKAT. Positions 837–863 form a coiled coil; it reads EKATKVQDIKNNLKEAIETIVAAMSNL. The G2 motif stretch occupies residues 946–954; that stretch reads DLPRCRVLT. GTP-binding positions include 947–954, 973–977, and 1042–1045; these read LPRCRVLT, DVGGQ, and NKQD. R951 is modified (ADP-ribosylarginine; by cholera toxin). T954 serves as a coordination point for Mg(2+). The segment at 969–978 is G3 motif; sequence FHMFDVGGQR. Residues 1038-1045 form a G4 motif region; sequence ILFLNKQD. A Phosphoserine modification is found at S1102. Positions 1114–1119 are G5 motif; that stretch reads TCAVDT. A1116 contributes to the GTP binding site.

Belongs to the G-alpha family. G(s) subfamily. G proteins are composed of 3 units; alpha, beta and gamma. The alpha chain contains the guanine nucleotide binding site. Interacts through its N-terminal region with ALEX which is produced from the same locus in a different open reading frame. This interaction may inhibit its adenylyl cyclase-stimulating activity. Interacts with MAGED2. As to expression, enriched in neuroendocrine tissues with a particularly high level of expression in pituitary where it is abundant in intermediate and anterior lobes. In adrenal gland, found in central region containing medullary chromaffin cells but not in cortex. In cerebellum, strongly expressed in perikarya of Purkinje cells. Not detected in liver, kidney or neurohypophysis.

It is found in the cell membrane. Its subcellular location is the apical cell membrane. In terms of biological role, guanine nucleotide-binding proteins (G proteins) function as transducers in numerous signaling pathways controlled by G protein-coupled receptors (GPCRs). Signaling involves the activation of adenylyl cyclases, resulting in increased levels of the signaling molecule cAMP. GNAS functions downstream of several GPCRs, including beta-adrenergic receptors. XLas isoforms interact with the same set of receptors as Gnas isoforms. This is Guanine nucleotide-binding protein G(s) subunit alpha isoforms XLas from Rattus norvegicus (Rat).